A 369-amino-acid chain; its full sequence is Leucine carboxyl methyltransferase 1 (369 aa).

Residues Arg84, Gly108, Asp132, 187-188, and Glu215 contribute to the S-adenosyl-L-methionine site; that span reads DL.

Belongs to the methyltransferase superfamily. LCMT family.

The enzyme catalyses [phosphatase 2A protein]-C-terminal L-leucine + S-adenosyl-L-methionine = [phosphatase 2A protein]-C-terminal L-leucine methyl ester + S-adenosyl-L-homocysteine. Functionally, methylates the carboxyl group of the C-terminal leucine residue of protein phosphatase 2A catalytic subunits to form alpha-leucine ester residues. The protein is Leucine carboxyl methyltransferase 1 (PPM1) of Debaryomyces hansenii (strain ATCC 36239 / CBS 767 / BCRC 21394 / JCM 1990 / NBRC 0083 / IGC 2968) (Yeast).